Reading from the N-terminus, the 153-residue chain is Ribonuclease H (153 aa).

An RNase H type-1 domain is found at 1–142; it reads MTPEVVIYTD…ADALARKGLS (142 aa). Mg(2+) contacts are provided by Asp10, Glu48, Asp70, and Asp134.

This sequence belongs to the RNase H family. Monomer. Mg(2+) serves as cofactor.

It is found in the cytoplasm. The catalysed reaction is Endonucleolytic cleavage to 5'-phosphomonoester.. In terms of biological role, endonuclease that specifically degrades the RNA of RNA-DNA hybrids. The polypeptide is Ribonuclease H (Phenylobacterium zucineum (strain HLK1)).